Consider the following 385-residue polypeptide: Phosphotransferase FrzJ (385 aa).

The ATP site is built by Asn-38 and Lys-59. The active site involves Asp-245.

It belongs to the methylthioribose kinase family. Monomer.

It catalyses the reaction (1S,3S,6S,7S,8S,9S)-6-[(4-methoxyphenyl)methyl]-3-(methylamino)-5-azatricyclo[6.3.1.0(1,5)]dodecane-7,9-diol + ATP = (-)-FR901483 + ADP + 2 H(+). The protein operates within secondary metabolite biosynthesis. Phosphotransferase; part of the gene cluster that mediates the biosynthesis of the alkaloid (-)-FR901483, a potent immunosuppressant that shows efficacy in animal models and a probable inhibitor of purine nucleotide biosynthesis by targeting phosphoribosylpyrophosphate amidotransferase (PPAT). FrzJ catalyzes the last step of the pathway by phosphorylating the C4'-OH of dephospho-(-)-FR901483 to produce (-)-FR901483. The biosynthesis of (-)-FR901483 starts with the condensation of two L-tyrosines to yield (S,S)-dityrosyl-piperazine. This process occurs in 3 steps with the non-canonical nonribosomal peptide synthetase FrzA catalyzing the reduction of L-tyrosine into L-tyrosinal, the spontaneous condensation of 2 L-tyrosinal units, and the subsequent reduction by the NmrA-like family domain-containing oxidoreductase FrzB. The cytochrome P450 monooxygenase FrzC then performs coupling between N10 and C1' to morph the piperazine into a 1,4-diazabicyclo[3.2.1]octane spiro-fused to a 2,5-cyclohexadienone. The dienone portion is further reduced to cyclohexanone by the flavin-dependent reductase FrzD. The methyltranserases (MTs) FrzE and FrzF are then involved in the methylation at the C10' amine and the C4 phenolic oxygen, respectively. The order of the two MTs appear to be interchangeable. Cleavage of the C9-N10' bond by the dioxygenase FrzG then leads to formation of a conjugated iminium. In addition to the oxidation of C9, an additional dehydrogenation between C7 and C8 can occur to give a likely shunt product. The next biosynthetic step is the intramolecular aldol condensation catalyzed by the newly identified aldolase FrzH to yield an aza-tricyclic product with the formation of a C9-C3' bond. The short-chain dehydrogenase/reductase FrzI then produces dephospho-(-)-FR901483 that is phosphorylated at C4'-OH into (-)-FR901483 by the phosphotransferase FrzJ. The protein is Phosphotransferase FrzJ of Cladobotryum sp.